The primary structure comprises 500 residues: L-arabinose isomerase (500 aa).

Mn(2+) is bound by residues Glu306, Glu333, His349, and His448.

It belongs to the arabinose isomerase family. Mn(2+) is required as a cofactor.

The enzyme catalyses beta-L-arabinopyranose = L-ribulose. It participates in carbohydrate degradation; L-arabinose degradation via L-ribulose; D-xylulose 5-phosphate from L-arabinose (bacterial route): step 1/3. Catalyzes the conversion of L-arabinose to L-ribulose. This Shewanella sp. (strain MR-7) protein is L-arabinose isomerase.